A 1091-amino-acid chain; its full sequence is Isoleucine--tRNA ligase (1091 aa).

The 'HIGH' region motif lies at 48–58 (PFATGLPHFGH). A 'KMSKS' region motif is present at residues 625-629 (KMSKA). Lys628 lines the ATP pocket.

Belongs to the class-I aminoacyl-tRNA synthetase family. IleS type 2 subfamily. Monomer. It depends on Zn(2+) as a cofactor.

Its subcellular location is the cytoplasm. It carries out the reaction tRNA(Ile) + L-isoleucine + ATP = L-isoleucyl-tRNA(Ile) + AMP + diphosphate. Catalyzes the attachment of isoleucine to tRNA(Ile). As IleRS can inadvertently accommodate and process structurally similar amino acids such as valine, to avoid such errors it has two additional distinct tRNA(Ile)-dependent editing activities. One activity is designated as 'pretransfer' editing and involves the hydrolysis of activated Val-AMP. The other activity is designated 'posttransfer' editing and involves deacylation of mischarged Val-tRNA(Ile). The polypeptide is Isoleucine--tRNA ligase (Treponema pallidum (strain Nichols)).